A 498-amino-acid chain; its full sequence is Ammonium transporter 1 member 3 (498 aa).

The next 11 membrane-spanning stretches (helical) occupy residues 41–61, 76–96, 122–142, 150–170, 194–214, 238–258, 277–299, 307–327, 329–349, 362–382, and 414–434; these read LLFS…LCAG, VLDA…FAFG, FFLF…GSIA, YLIY…HWFW, FAGS…GAFI, LVVL…PGSF, AVGR…TLYG, WNVT…TAGC, VVDP…LIGC, LEAT…TALF, and IVQI…LFYV. Residues 473–498 are disordered; sequence RAKSAAETARVEPRKSPEQAAAGQFV.

It belongs to the ammonia transporter channel (TC 1.A.11.2) family. As to expression, expressed in roots.

It is found in the membrane. In terms of biological role, ammonium transporter probably involved in ammonium uptake from the soil. The protein is Ammonium transporter 1 member 3 (AMT1-3) of Oryza sativa subsp. japonica (Rice).